Consider the following 329-residue polypeptide: DNA-directed RNA polymerase subunit alpha (329 aa).

The alpha N-terminal domain (alpha-NTD) stretch occupies residues 1 to 235; sequence MQGSVTEFLK…EQLEAFVDLR (235 aa). The segment at 249–329 is alpha C-terminal domain (alpha-CTD); that stretch reads FDPILLRPVD…NWPPASIADE (81 aa).

Belongs to the RNA polymerase alpha chain family. In terms of assembly, homodimer. The RNAP catalytic core consists of 2 alpha, 1 beta, 1 beta' and 1 omega subunit. When a sigma factor is associated with the core the holoenzyme is formed, which can initiate transcription.

It carries out the reaction RNA(n) + a ribonucleoside 5'-triphosphate = RNA(n+1) + diphosphate. Functionally, DNA-dependent RNA polymerase catalyzes the transcription of DNA into RNA using the four ribonucleoside triphosphates as substrates. In Pectobacterium atrosepticum (strain SCRI 1043 / ATCC BAA-672) (Erwinia carotovora subsp. atroseptica), this protein is DNA-directed RNA polymerase subunit alpha.